Here is a 176-residue protein sequence, read N- to C-terminus: Conidiation-specific protein 8 (176 aa).

Disordered stretches follow at residues 1–66 (MDDT…SKLI) and 79–162 (AASE…PQGF). A compositionally biased stretch (low complexity) spans 79 to 99 (AASEAFRSERSASTSSTTSET).

This chain is Conidiation-specific protein 8 (con-8), found in Neurospora crassa (strain ATCC 24698 / 74-OR23-1A / CBS 708.71 / DSM 1257 / FGSC 987).